The sequence spans 226 residues: Lysoplasmalogenase TMEM86B (226 aa).

At 1–23 (MDPGKEGLPRKPRFSAQQLHVGK) the chain is on the cytoplasmic side. Residues 24 to 40 (WLSPFFFTCAVYFLLWI) form a helical membrane-spanning segment. The Extracellular portion of the chain corresponds to 41–46 (PDDQPS). A helical membrane pass occupies residues 47–64 (WVGALVKCLPVLSLVVFL). The Cytoplasmic portion of the chain corresponds to 65–76 (RAVDAGGGYSAR). The chain crosses the membrane as a helical span at residues 77–93 (LQGALLCSAVGDACLVW). Over 94–99 (PEAFLH) the chain is Extracellular. Residues 100-117 (GVAAFAAAHLLYLWAFGL) traverse the membrane as a helical segment. The Cytoplasmic segment spans residues 118–123 (TPLQPG). The chain crosses the membrane as a helical span at residues 124–140 (LLLLVILAALPYYGLLL). The Extracellular portion of the chain corresponds to 141–146 (WHLPPD). The helical transmembrane segment at 147 to 163 (LVLALTAYSLALATMLW) threads the bilayer. The Cytoplasmic segment spans residues 164-171 (RGLARGGS). Residues 172 to 188 (TGWGALLFTLSDTTLAW) traverse the membrane as a helical segment. Residues 189–199 (NAFAQPLPHAR) are Extracellular-facing. A helical membrane pass occupies residues 200-217 (LVVMTTYYSAQVLISLSV). Topologically, residues 218–226 (SQSPKLKPN) are cytoplasmic.

It belongs to the TMEM86 family. Homodimer.

The protein localises to the endoplasmic reticulum membrane. Its subcellular location is the cytoplasm. The enzyme catalyses a 1-O-(1Z-alkenyl)-sn-glycero-3-phosphocholine + H2O = a 2,3-saturated aldehyde + sn-glycerol 3-phosphocholine. It carries out the reaction a 1-O-(1Z-alkenyl)-sn-glycero-3-phosphoethanolamine + H2O = a 2,3-saturated aldehyde + sn-glycero-3-phosphoethanolamine. Its activity is regulated as follows. Competitively inhibited by lysophosphatidic acid. Functionally, catalyzes the hydrolysis of the vinyl ether bond of choline or ethanolamine lysoplasmalogens, forming fatty aldehyde and glycerophosphocholine or glycerophosphoethanolamine, respectively and is specific for the sn-2-deacylated (lyso) form of plasmalogen. The sequence is that of Lysoplasmalogenase TMEM86B (TMEM86B) from Sus scrofa (Pig).